The sequence spans 891 residues: DNA mismatch repair protein MutS (891 aa).

An ATP-binding site is contributed by 634 to 641; that stretch reads GPNMGGKS.

It belongs to the DNA mismatch repair MutS family.

This protein is involved in the repair of mismatches in DNA. It is possible that it carries out the mismatch recognition step. This protein has a weak ATPase activity. The sequence is that of DNA mismatch repair protein MutS from Burkholderia pseudomallei (strain 1106a).